The primary structure comprises 251 residues: Ribosome maturation factor RimP (251 aa).

Residues 176-251 form a disordered region; it reads SLRRGSAPPQ…ARLKNRDTLH (76 aa). A compositionally biased stretch (acidic residues) spans 186-196; the sequence is DGEEGDEEEGA. The segment covering 216–226 has biased composition (basic and acidic residues); sequence PKLDKKSDKPV.

The protein belongs to the RimP family.

It localises to the cytoplasm. Functionally, required for maturation of 30S ribosomal subunits. The chain is Ribosome maturation factor RimP from Methylorubrum extorquens (strain PA1) (Methylobacterium extorquens).